The primary structure comprises 71 residues: General transcription and DNA repair factor IIH subunit TFB5 (71 aa).

It belongs to the TFB5 family. Component of the 7-subunit TFIIH core complex.

It localises to the nucleus. Its subcellular location is the chromosome. Component of the general transcription and DNA repair factor IIH (TFIIH) core complex, which is involved in general and transcription-coupled nucleotide excision repair (NER) of damaged DNA and in RNA transcription by RNA polymerase II. In NER, TFIIH acts by opening DNA around the lesion to allow the excision of the damaged oligonucleotide and its replacement by a new DNA fragment. In transcription, TFIIH has an essential role in transcription initiation. When the pre-initiation complex (PIC) has been established, TFIIH is required for promoter opening and promoter escape. Necessary for the stability of the TFIIH complex and for the presence of normal levels of TFIIH in the cell. Required for efficient binding of TFIIH to damaged DNA. Dispensable for normal development, but required when transcription is challenged. This Caenorhabditis elegans protein is General transcription and DNA repair factor IIH subunit TFB5.